The following is a 250-amino-acid chain: Functional amyloid sbunit FapE (250 aa).

A signal peptide spans 1 to 27; it reads MLREHAMYTHHCFVLACCLGAALPAPA.

The protein belongs to the FapE family. In terms of assembly, a minor component of purified amyloid fibrils. Fibrils are resistant to boiling in 2% (weight/vol) SDS and require &gt;90% (vol/vol) formic acid to dissolve.

The protein localises to the fimbrium. The protein resides in the secreted. A minor component of the functional amyloid in this bacterium. Upon overexpression of the endogenous six-gene locus (fapA-fapF), cells form large clumps during liquid growth, make large amounts of biofilm and produce amyloid fibrils. This Pseudomonas aeruginosa (strain ATCC 15692 / DSM 22644 / CIP 104116 / JCM 14847 / LMG 12228 / 1C / PRS 101 / PAO1) protein is Functional amyloid sbunit FapE.